Here is a 294-residue protein sequence, read N- to C-terminus: uncharacterized protein (294 aa).

A run of 3 helical transmembrane segments spans residues 21 to 41 (AIVATNFSWLFITFFVMTFTF), 51 to 71 (PIIWTLYFFLCLIAFLLLWAA), and 77 to 97 (ILFSFAFGDVYSFFMAGVFLF). Residues 156–176 (HPVPFPAEPGSPDPVSPPPPI) form a disordered region. Residues 184–215 (ERAESLHAGNIELAEDLQRIQEMERNLENERS) are a coiled coil. Residues 265-277 (QQENESRLEERRF) are compositionally biased toward basic and acidic residues. The interval 265-294 (QQENESRLEERRFQSHSTNSLFEADSSRDN) is disordered.

It is found in the mitochondrion membrane. This is an uncharacterized protein from Arabidopsis thaliana (Mouse-ear cress).